The sequence spans 494 residues: Aspartyl/glutamyl-tRNA(Asn/Gln) amidotransferase subunit B (494 aa).

This sequence belongs to the GatB/GatE family. GatB subfamily. Heterotrimer of A, B and C subunits.

The enzyme catalyses L-glutamyl-tRNA(Gln) + L-glutamine + ATP + H2O = L-glutaminyl-tRNA(Gln) + L-glutamate + ADP + phosphate + H(+). It carries out the reaction L-aspartyl-tRNA(Asn) + L-glutamine + ATP + H2O = L-asparaginyl-tRNA(Asn) + L-glutamate + ADP + phosphate + 2 H(+). Its function is as follows. Allows the formation of correctly charged Asn-tRNA(Asn) or Gln-tRNA(Gln) through the transamidation of misacylated Asp-tRNA(Asn) or Glu-tRNA(Gln) in organisms which lack either or both of asparaginyl-tRNA or glutaminyl-tRNA synthetases. The reaction takes place in the presence of glutamine and ATP through an activated phospho-Asp-tRNA(Asn) or phospho-Glu-tRNA(Gln). This Rhizorhabdus wittichii (strain DSM 6014 / CCUG 31198 / JCM 15750 / NBRC 105917 / EY 4224 / RW1) (Sphingomonas wittichii) protein is Aspartyl/glutamyl-tRNA(Asn/Gln) amidotransferase subunit B.